The sequence spans 120 residues: MRLLAQLLGLLMLWVPGSSGDIVMTQTPLSSPVTLGQPASISCRSSQSLVHSDGNTYLSWLQQRPGQPPRLLIYKISNRFSGVPDRFSGSGAGTDFTLKISRVEAEDVGVYYCMQATQFP.

The signal sequence occupies residues 1–19 (MRLLAQLLGLLMLWVPGSS). The 101-residue stretch at 20 to 120 (GDIVMTQTPL…YYCMQATQFP (101 aa)) folds into the Ig-like domain. The segment at 21 to 43 (DIVMTQTPLSSPVTLGQPASISC) is framework-1. The cysteines at positions 43 and 113 are disulfide-linked. The complementarity-determining-1 stretch occupies residues 44 to 59 (RSSQSLVHSDGNTYLS). Positions 60 to 74 (WLQQRPGQPPRLLIY) are framework-2. The tract at residues 75–81 (KISNRFS) is complementarity-determining-2. The interval 82 to 113 (GVPDRFSGSGAGTDFTLKISRVEAEDVGVYYC) is framework-3. Positions 114–120 (MQATQFP) are complementarity-determining-3.

In terms of assembly, immunoglobulins are composed of two identical heavy chains and two identical light chains; disulfide-linked.

Its subcellular location is the secreted. It is found in the cell membrane. Its function is as follows. V region of the variable domain of immunoglobulin light chains that participates in the antigen recognition. Immunoglobulins, also known as antibodies, are membrane-bound or secreted glycoproteins produced by B lymphocytes. In the recognition phase of humoral immunity, the membrane-bound immunoglobulins serve as receptors which, upon binding of a specific antigen, trigger the clonal expansion and differentiation of B lymphocytes into immunoglobulins-secreting plasma cells. Secreted immunoglobulins mediate the effector phase of humoral immunity, which results in the elimination of bound antigens. The antigen binding site is formed by the variable domain of one heavy chain, together with that of its associated light chain. Thus, each immunoglobulin has two antigen binding sites with remarkable affinity for a particular antigen. The variable domains are assembled by a process called V-(D)-J rearrangement and can then be subjected to somatic hypermutations which, after exposure to antigen and selection, allow affinity maturation for a particular antigen. This is Immunoglobulin kappa variable 2-24 from Homo sapiens (Human).